The sequence spans 145 residues: Ribonuclease H (145 aa).

The 142-residue stretch at Ser2–Ile143 folds into the RNase H type-1 domain. Mg(2+) contacts are provided by Asp11, Glu49, Asp71, and Asp135.

It belongs to the RNase H family. In terms of assembly, monomer. Mg(2+) serves as cofactor.

The protein localises to the cytoplasm. It carries out the reaction Endonucleolytic cleavage to 5'-phosphomonoester.. Its function is as follows. Endonuclease that specifically degrades the RNA of RNA-DNA hybrids. In Wolbachia sp. subsp. Drosophila simulans (strain wRi), this protein is Ribonuclease H.